A 426-amino-acid polypeptide reads, in one-letter code: Glutamate-1-semialdehyde 2,1-aminomutase (426 aa).

The residue at position 265 (lysine 265) is an N6-(pyridoxal phosphate)lysine.

The protein belongs to the class-III pyridoxal-phosphate-dependent aminotransferase family. HemL subfamily. In terms of assembly, homodimer. The cofactor is pyridoxal 5'-phosphate.

The protein resides in the cytoplasm. The catalysed reaction is (S)-4-amino-5-oxopentanoate = 5-aminolevulinate. It functions in the pathway porphyrin-containing compound metabolism; protoporphyrin-IX biosynthesis; 5-aminolevulinate from L-glutamyl-tRNA(Glu): step 2/2. In Escherichia coli O127:H6 (strain E2348/69 / EPEC), this protein is Glutamate-1-semialdehyde 2,1-aminomutase.